The sequence spans 317 residues: Protease HtpX homolog (317 aa).

2 helical membrane-spanning segments follow: residues 6–26 (TAIL…AIGG) and 28–48 (GGMM…YWNS). Histidine 130 contributes to the Zn(2+) binding site. Residue glutamate 131 is part of the active site. Zn(2+) is bound at residue histidine 134. 2 consecutive transmembrane segments (helical) span residues 145 to 165 (MTAT…LFGG) and 173 to 193 (PFGA…AMLV). A Zn(2+)-binding site is contributed by glutamate 202. Residues 283-317 (GGGGFAPGPAPAVRPPGGNPWGVDPGGGQRRGPWG) are disordered. The span at 290-300 (GPAPAVRPPGG) shows a compositional bias: pro residues. Positions 306–317 (DPGGGQRRGPWG) are enriched in gly residues.

Belongs to the peptidase M48B family. The cofactor is Zn(2+).

The protein localises to the cell inner membrane. The sequence is that of Protease HtpX homolog from Xanthobacter autotrophicus (strain ATCC BAA-1158 / Py2).